Here is a 759-residue protein sequence, read N- to C-terminus: Fidgetin (759 aa).

4 disordered regions span residues 89–111, 200–237, 258–293, and 337–429; these read SNYSDTPSGLVNGRKNDSEPWQP, SQATPALPSPHPSPLHSSGLLQPPPPPPPPPALVPGYN, VGSGYSPGGAPPPPSAYLPSGIPAPTPLPPTTVPGY, and SYGQ…VMSE. Composition is skewed to pro residues over residues 221–232 and 266–289; these read QPPPPPPPPPAL and GAPPPPSAYLPSGIPAPTPLPPTT. Composition is skewed to polar residues over residues 337–347 and 382–418; these read SYGQQRSTQSP and LMPSEQQRKFSSQSSRALTPPSYSTAKNSLGSRSSES. At T400 the chain carries Phosphothreonine. Residues A489 and 529–534 contribute to the ATP site; that span reads GTGKTL.

The protein belongs to the AAA ATPase family. In terms of assembly, interacts with AKAP8 (via C-terminus). As to expression, widely expressed.

It is found in the nucleus matrix. The protein resides in the cytoplasm. Its subcellular location is the cytoskeleton. It localises to the microtubule organizing center. The protein localises to the centrosome. ATP-dependent microtubule severing protein. Severs microtubules along their length and depolymerizes their ends, primarily the minus-end, suppressing microtubule growth from and attachment to centrosomes. Microtubule severing may promote rapid reorganization of cellular microtubule arrays and the release of microtubules from the centrosome following nucleation. Microtubule release from the mitotic spindle poles may allow depolymerization of the microtubule end proximal to the spindle pole, leading to poleward microtubule flux and poleward motion of chromosome. This chain is Fidgetin (Fign), found in Mus musculus (Mouse).